A 427-amino-acid chain; its full sequence is Putative dipeptidase MCYG_02918 (427 aa).

Residues 1-29 (MAPERRSRLSDAGILVSLLALTSLVPVQA) form the signal peptide. Histidine 55, aspartate 57, and glutamate 167 together coordinate Zn(2+). A disulfide bridge connects residues cysteine 106 and cysteine 196. Histidine 194 serves as a coordination point for substrate. Residues histidine 238 and histidine 259 each contribute to the Zn(2+) site. Substrate is bound by residues arginine 270 and aspartate 330. N-linked (GlcNAc...) asparagine glycosylation occurs at asparagine 402.

The protein belongs to the metallo-dependent hydrolases superfamily. Peptidase M19 family. Requires Zn(2+) as cofactor.

The enzyme catalyses an L-aminoacyl-L-amino acid + H2O = 2 an L-alpha-amino acid. Its function is as follows. Hydrolyzes a wide range of dipeptides. The chain is Putative dipeptidase MCYG_02918 from Arthroderma otae (strain ATCC MYA-4605 / CBS 113480) (Microsporum canis).